Consider the following 199-residue polypeptide: Recombination protein RecR (199 aa).

A C4-type zinc finger spans residues 57-72; the sequence is CEICGNLDTKSICHIC. One can recognise a Toprim domain in the interval 80-175; it reads STIAIVETVA…KISRLASGIP (96 aa).

It belongs to the RecR family.

May play a role in DNA repair. It seems to be involved in an RecBC-independent recombinational process of DNA repair. It may act with RecF and RecO. This chain is Recombination protein RecR, found in Rickettsia prowazekii (strain Madrid E).